The following is a 505-amino-acid chain: Deoxyguanosinetriphosphate triphosphohydrolase (505 aa).

One can recognise an HD domain in the interval 66–273 (RLTHSLEVQQ…MEAADDISYC (208 aa)).

It belongs to the dGTPase family. Type 1 subfamily. In terms of assembly, homotetramer. It depends on Mg(2+) as a cofactor.

The enzyme catalyses dGTP + H2O = 2'-deoxyguanosine + triphosphate + H(+). DGTPase preferentially hydrolyzes dGTP over the other canonical NTPs. This Escherichia fergusonii (strain ATCC 35469 / DSM 13698 / CCUG 18766 / IAM 14443 / JCM 21226 / LMG 7866 / NBRC 102419 / NCTC 12128 / CDC 0568-73) protein is Deoxyguanosinetriphosphate triphosphohydrolase.